The following is a 282-amino-acid chain: Succinate dehydrogenase [ubiquinone] iron-sulfur subunit, mitochondrial (282 aa).

Residues 1–26 (MAAVVFSLRRSGPVLRLSGALQVSRG) constitute a mitochondrion transit peptide. The region spanning 42 to 135 (KKFAIYRWDP…VSKIYPLPHM (94 aa)) is the 2Fe-2S ferredoxin-type domain. Positions 95, 100, 103, and 115 each coordinate [2Fe-2S] cluster. Residues 178–208 (DRDKLDGLYECILCACCSTSCPSYWWNADKY) form the 4Fe-4S ferredoxin-type domain. Residues C188, C191, and C194 each coordinate [4Fe-4S] cluster. Residue C198 participates in [3Fe-4S] cluster binding. W203 lines the a ubiquinone pocket. [3Fe-4S] cluster is bound by residues C245 and C251. Position 255 (C255) interacts with [4Fe-4S] cluster.

It belongs to the succinate dehydrogenase/fumarate reductase iron-sulfur protein family. Component of complex II composed of four subunits: the flavoprotein (FP) sdha, iron-sulfur protein (IP) sdhb, and a cytochrome b composed of sdhc and sdhd. Requires [2Fe-2S] cluster as cofactor. It depends on [3Fe-4S] cluster as a cofactor. The cofactor is [4Fe-4S] cluster.

It is found in the mitochondrion inner membrane. The catalysed reaction is a quinone + succinate = fumarate + a quinol. It carries out the reaction (R)-malate + a quinone = enol-oxaloacetate + a quinol. The enzyme catalyses (S)-malate + a quinone = enol-oxaloacetate + a quinol. It functions in the pathway carbohydrate metabolism; tricarboxylic acid cycle; fumarate from succinate (eukaryal route): step 1/1. Enol-oxaloacetate inhibits the succinate dehydrogenase activity. Its function is as follows. Iron-sulfur protein (IP) subunit of the succinate dehydrogenase complex (mitochondrial respiratory chain complex II), responsible for transferring electrons from succinate to ubiquinone (coenzyme Q). SDH also oxidizes malate to the non-canonical enol form of oxaloacetate, enol-oxaloacetate. Enol-oxaloacetate, which is a potent inhibitor of the succinate dehydrogenase activity, is further isomerized into keto-oxaloacetate. In Xenopus laevis (African clawed frog), this protein is Succinate dehydrogenase [ubiquinone] iron-sulfur subunit, mitochondrial (sdhb).